Here is a 216-residue protein sequence, read N- to C-terminus: Transmembrane protein 139 (216 aa).

A signal peptide spans 1-25 (MVPMHLLGRLEKPLLLLCCASFLLG). Residues 26 to 34 (LALLGIKTD) are Extracellular-facing. A helical membrane pass occupies residues 35-55 (ITPVAYFFLTLGGFFLFAYLL). Over 56–216 (VRFLEWGLRS…VFYEDNWAPP (161 aa)) the chain is Cytoplasmic. The segment at 104–163 (RPQELDQPPPYSTVVIPPAPEEEQPSHPEGSRRAKLEQRRMASEGSMAQEGSPGRAPINL) is disordered. Basic and acidic residues predominate over residues 127–145 (QPSHPEGSRRAKLEQRRMA). 2 positions are modified to phosphoserine: S146 and S155.

In terms of assembly, interacts with isoform 2 of SLC4A1.

Its subcellular location is the membrane. Functionally, may be involved in cellular trafficking of proteins such as SLC4A1. This Homo sapiens (Human) protein is Transmembrane protein 139 (TMEM139).